The primary structure comprises 2211 residues: Nonribosomal peptide synthetase 13 (2211 aa).

The tract at residues 76–475 is adenylation 1; it reads TYAELDSLSD…IEHHLQLTLP (400 aa). One can recognise a Carrier 1 domain in the interval 594–671; it reads PPSTPKEATI…EQSKRAGLIQ (78 aa). Serine 631 is modified (O-(pantetheine 4'-phosphoryl)serine). The segment at 710–975 is condensation 1; the sequence is EDIYPCTALQ…IATVPTRIRV (266 aa). The tract at residues 1169–1563 is adenylation 2; the sequence is TYRELWAHSS…LGAVEASVMR (395 aa). The region spanning 1677–1756 is the Carrier 2 domain; that stretch reads PMSDDNERRL…RSRHLITEQA (80 aa). Serine 1714 is subject to O-(pantetheine 4'-phosphoryl)serine. The interval 1814–2069 is condensation 2; sequence HFQFDLSGAV…CTNYIPYRLS (256 aa).

It belongs to the NRP synthetase family.

It catalyses the reaction L-proline + L-tryptophan + 2 ATP = brevianamide F + 2 AMP + 2 diphosphate + 2 H(+). It functions in the pathway mycotoxin biosynthesis. In terms of biological role, nonribosomal peptide synthetase; part of the gene cluster that mediates the biosynthesis of fumitremorgins, indole alkaloids that carry not only intriguing chemical structures, but also interesting biological and pharmacological activities. The biosynthesis of fumitremorgin-type alkaloids begins by condensation of the two amino acids L-tryptophan and L-proline to brevianamide F, catalyzed by the non-ribosomal peptide synthetase ftmA. Brevianamide F is then prenylated by the prenyltransferase ftmPT1/ftmB in the presence of dimethylallyl diphosphate, resulting in the formation of tryprostatin B. The three cytochrome P450 monooxygenases, ftmP450-1/ftmC, ftmP450-2/ftmE and ftmP450-3/FtmG, are responsible for the conversion of tryprostatin B to 6-hydroxytryprostatin B, tryprostatin A to fumitremorgin C and fumitremorgin C to 12,13-dihydroxyfumitremorgin C, respectively. The putative methyltransferase ftmMT/ftmD is expected for the conversion of 6-hydroxytryprostatin B to tryprostatin A. FtmPT2/FtmH catalyzes the prenylation of 12,13-dihydroxyfumitre-morgin C in the presence of dimethylallyl diphosphate, resulting in the formation of fumitremorgin B. Fumitremorgin B is further converted to verruculogen by ftmOx1/ftmF via the insertion of an endoperoxide bond between the two prenyl moieties. In some fungal species, verruculogen is further converted to fumitremorgin A, but the enzymes involved in this step have not been identified yet. The polypeptide is Nonribosomal peptide synthetase 13 (Aspergillus fumigatus (strain ATCC MYA-4609 / CBS 101355 / FGSC A1100 / Af293) (Neosartorya fumigata)).